Here is a 722-residue protein sequence, read N- to C-terminus: Lysophospholipid acyltransferase 6 (722 aa).

5 consecutive transmembrane segments (helical) span residues 25-45 (MVGLSVDLVNFLICQISALFL), 62-84 (LRHTFALSIGLAFGYFCFGQQAI), 104-123 (IVQRAVLLVAMSYLLCVHLM), 180-200 (ALEYFSYVWHFQSILAGPLVF), and 243-263 (KVVGSLVCAFIFMKFVKIYPV). Active-site residues include Asn349 and His381. The next 3 membrane-spanning stretches (helical) occupy residues 378 to 398 (AVWHGFYPGYYLTFATGAVVV), 424 to 444 (ILTCLITRVVLGYATFPFVLL), and 452 to 472 (LYLRFYLCLHIISLVTIFILP). Polar residues-rich tracts occupy residues 485–511 (NGNGNVRLSGSGNTKDAVTTSVESTAA) and 549–570 (VEQPTEQPNNVNLRSRPQQQQP). Disordered regions lie at residues 485–582 (NGNG…PTCA) and 650–687 (NGAISLDSSNGGGLRKRNISSVHDNGTDPGHATADLHP).

This sequence belongs to the membrane-bound acyltransferase family.

Its subcellular location is the endoplasmic reticulum. The protein localises to the membrane. It carries out the reaction a 1-acyl-sn-glycero-3-phospho-L-serine + an acyl-CoA = a 1,2-diacyl-sn-glycero-3-phospho-L-serine + CoA. It catalyses the reaction 1-(9Z-octadecenoyl)-sn-glycero-3-phospho-L-serine + (9Z)-hexadecenoyl-CoA = 1-(9Z-octadecenoyl)-2-(9Z-hexadecenoyl)-sn-glycero-3-phospho-L-serine + CoA. The enzyme catalyses 1-(9Z-octadecenoyl)-sn-glycero-3-phospho-L-serine + (9Z)-octadecenoyl-CoA = 1,2-di-(9Z)-octadecenoyl-sn-glycero-3-phospho-L-serine + CoA. The catalysed reaction is a 1-acyl-sn-glycero-3-phosphocholine + an acyl-CoA = a 1,2-diacyl-sn-glycero-3-phosphocholine + CoA. It carries out the reaction 1-hexadecanoyl-sn-glycero-3-phosphocholine + (9Z)-octadecenoyl-CoA = 1-hexadecanoyl-2-(9Z-octadecenoyl)-sn-glycero-3-phosphocholine + CoA. It catalyses the reaction (9Z)-hexadecenoyl-CoA + 1-hexadecanoyl-sn-glycero-3-phosphocholine = 1-hexadecanoyl-2-(9Z-hexadecenoyl)-sn-glycero-3-phosphocholine + CoA. The enzyme catalyses a 1-acyl-sn-glycero-3-phosphoethanolamine + an acyl-CoA = a 1,2-diacyl-sn-glycero-3-phosphoethanolamine + CoA. The catalysed reaction is 1-hexadecanoyl-sn-glycero-3-phosphoethanolamine + (9Z)-octadecenoyl-CoA = 1-hexadecanoyl-2-(9Z-octadecenoyl)-sn-glycero-3-phosphoethanolamine + CoA. It carries out the reaction 1-hexadecanoyl-sn-glycero-3-phosphoethanolamine + (9Z,12Z)-octadecadienoyl-CoA = 1-hexadecanoyl-2-(9Z,12Z-octadecadienoyl)-sn-glycero-3-phosphoethanolamine + CoA. It catalyses the reaction 1-hexadecanoyl-sn-glycero-3-phosphoethanolamine + (9Z)-hexadecenoyl-CoA = 1-hexadecanoyl-2-(9Z)-hexadecenoyl-sn-glycero-3-phosphoethanolamine + CoA. The enzyme catalyses 1-(9Z-octadecenoyl)-sn-glycero-3-phospho-(1'-sn-glycerol) + (9Z)-octadecenoyl-CoA = 1,2-di-(9Z-octadecenoyl)-sn-glycero-3-phospho-(1'-sn-glycerol) + CoA. Its pathway is lipid metabolism; phospholipid metabolism. Acyltransferase with broad-specificity, that mediates the acylation of lysophospholipids to produce phospholipids (glycerophospholipids). Converts lysophosphatidylserine (1-acyl-2-hydroxy-sn-glycero-3-phospho-L-serine or LPS) to phosphatidylserine (1,2-diacyl-sn-glycero-3-phospho-L-serine or PS) (LPSAT activity), lysophosphatidylcholine (1-acyl-sn-glycero-3-phosphocholine or LPC) to phosphatidylcholine (1,2-diacyl-sn-glycero-3-phosphocholine or PC) (LPCAT activity), also lysophosphatidylethanolamine (1-acyl-sn-glycero-3-phosphochethanolamine or LPE) to phosphatidylchethanolamine (LPEAT activity) and lysophosphatidylglycerol (1-acyl-2-hydroxy-sn-glycero-3-phospho-(1'-sn-glycerol) or LPG) to phosphatidylglycerol (1,2-diacyl-sn-glycero-3-phospho-(1'-sn-glycerol) or PG) (LPGAT activity). Has a preference for unsaturated fatty acids of at least 16 carbons such as oleoyl-CoA ((9Z)-octadecenoyl-CoA) and palmitoleoyl-CoA ((9Z)-hexadecenoyl-CoA). Glycerophospholipids are important structural and functional components of cellular membrane, acyl-chain remodeling regulates the molecular species distribution of glycerophospholipids which can affect membrane fluidity and curvature. Essential for fertility and viability together with Nessy protein (Nes). The chain is Lysophospholipid acyltransferase 6 from Drosophila melanogaster (Fruit fly).